The primary structure comprises 172 residues: MAEKRNIFLIGPMGAGKSTIGKYLSETLHMDLYDSDQEIERRTGADIAWVFDVEGEEGFRKREEQVISDLSELQGIVLATGGGAIKSPLTRNRLSARGIVVYLETPIEKQLARTQRDKRRPLLRTEEPPREVLTRLADEREPLYREIADYVVRTDELTAKQVATQIVELLGL.

ATP is bound at residue 14 to 19 (GAGKST). Serine 18 serves as a coordination point for Mg(2+). The substrate site is built by aspartate 36, arginine 60, and glycine 82. Arginine 120 is a binding site for ATP. Position 140 (arginine 140) interacts with substrate.

It belongs to the shikimate kinase family. As to quaternary structure, monomer. Mg(2+) serves as cofactor.

It is found in the cytoplasm. It carries out the reaction shikimate + ATP = 3-phosphoshikimate + ADP + H(+). The protein operates within metabolic intermediate biosynthesis; chorismate biosynthesis; chorismate from D-erythrose 4-phosphate and phosphoenolpyruvate: step 5/7. In terms of biological role, catalyzes the specific phosphorylation of the 3-hydroxyl group of shikimic acid using ATP as a cosubstrate. This Tolumonas auensis (strain DSM 9187 / NBRC 110442 / TA 4) protein is Shikimate kinase.